A 376-amino-acid chain; its full sequence is GDSL esterase/lipase At5g55050 (376 aa).

The signal sequence occupies residues methionine 1 to alanine 29. Catalysis depends on serine 46, which acts as the Nucleophile. Asparagine 134 and asparagine 245 each carry an N-linked (GlcNAc...) asparagine glycan. Residues aspartate 340 and histidine 344 contribute to the active site.

This sequence belongs to the 'GDSL' lipolytic enzyme family.

The protein localises to the secreted. The chain is GDSL esterase/lipase At5g55050 from Arabidopsis thaliana (Mouse-ear cress).